The primary structure comprises 432 residues: Protein prenyltransferase alpha subunit repeat-containing protein 1-A (432 aa).

6 PFTA repeats span residues 86–119 (ELIDVTCTLLLLNPDFTTAWNVRKELIQSGTLNP), 121–154 (KDLQLGKLALTKFPKSPETWIHRRWALQRLVQEL), 179–212 (EEMHVCCEAAGRYPSNYNSWSHRIWVVQHLGNLK), 218–251 (DELSSTKHWVSMHVSDHSGFHYRQFLLKSLLSKT), 294–327 (EEMDLNRELVDSFPGHETLWCHRRQIFNLIHQLL), and 395–432 (SFDSELRFINCVLTNCCSPEQSRFAASYRKWLLSLQGH).

It belongs to the protein prenyltransferase subunit alpha family.

The sequence is that of Protein prenyltransferase alpha subunit repeat-containing protein 1-A (ptar1-a) from Xenopus laevis (African clawed frog).